Here is a 373-residue protein sequence, read N- to C-terminus: tRNA-specific 2-thiouridylase MnmA (373 aa).

Residues 12-19 (GMSGGVDS) and methionine 38 each bind ATP. The interval 98-100 (NPD) is interaction with target base in tRNA. Residue cysteine 103 is the Nucleophile of the active site. Cysteine 103 and cysteine 200 are oxidised to a cystine. Glycine 127 lines the ATP pocket. An interaction with tRNA region spans residues 150-152 (KDQ). Cysteine 200 acts as the Cysteine persulfide intermediate in catalysis. The interaction with tRNA stretch occupies residues 312–313 (RY).

The protein belongs to the MnmA/TRMU family.

The protein resides in the cytoplasm. It catalyses the reaction S-sulfanyl-L-cysteinyl-[protein] + uridine(34) in tRNA + AH2 + ATP = 2-thiouridine(34) in tRNA + L-cysteinyl-[protein] + A + AMP + diphosphate + H(+). Catalyzes the 2-thiolation of uridine at the wobble position (U34) of tRNA, leading to the formation of s(2)U34. The sequence is that of tRNA-specific 2-thiouridylase MnmA from Streptococcus pyogenes serotype M6 (strain ATCC BAA-946 / MGAS10394).